We begin with the raw amino-acid sequence, 458 residues long: Probable ECA polymerase (458 aa).

The next 11 helical transmembrane spans lie at 3-23 (LAQF…VLTL), 37-57 (VFFS…TCLL), 65-85 (VVPV…YAIY), 112-132 (THLT…IFFL), 154-174 (GVAL…VYFL), 180-200 (AWFF…VIVG), 201-221 (GTRA…IVRG), 222-242 (WISL…MFWL), 340-360 (LVVM…GMII), 377-397 (YKAA…IVLA), and 409-429 (VFFC…YWLF).

Belongs to the WzyE family. Probably part of a complex composed of WzxE, WzyE and WzzE.

It localises to the cell inner membrane. Its pathway is bacterial outer membrane biogenesis; enterobacterial common antigen biosynthesis. Probably involved in the polymerization of enterobacterial common antigen (ECA) trisaccharide repeat units. The protein is Probable ECA polymerase of Serratia proteamaculans (strain 568).